Here is a 660-residue protein sequence, read N- to C-terminus: tRNA 5-methylaminomethyl-2-thiouridine biosynthesis bifunctional protein MnmC (660 aa).

A tRNA (mnm(5)s(2)U34)-methyltransferase region spans residues 1-242; sequence MTDRIVPATL…KRAMLVGEFA (242 aa). The FAD-dependent cmnm(5)s(2)U34 oxidoreductase stretch occupies residues 266–660; it reads IGAGLAGCAV…VRALRHGRVA (395 aa).

It in the N-terminal section; belongs to the methyltransferase superfamily. tRNA (mnm(5)s(2)U34)-methyltransferase family. This sequence in the C-terminal section; belongs to the DAO family. FAD serves as cofactor.

The protein localises to the cytoplasm. It carries out the reaction 5-aminomethyl-2-thiouridine(34) in tRNA + S-adenosyl-L-methionine = 5-methylaminomethyl-2-thiouridine(34) in tRNA + S-adenosyl-L-homocysteine + H(+). In terms of biological role, catalyzes the last two steps in the biosynthesis of 5-methylaminomethyl-2-thiouridine (mnm(5)s(2)U) at the wobble position (U34) in tRNA. Catalyzes the FAD-dependent demodification of cmnm(5)s(2)U34 to nm(5)s(2)U34, followed by the transfer of a methyl group from S-adenosyl-L-methionine to nm(5)s(2)U34, to form mnm(5)s(2)U34. This is tRNA 5-methylaminomethyl-2-thiouridine biosynthesis bifunctional protein MnmC from Burkholderia mallei (strain NCTC 10247).